Consider the following 375-residue polypeptide: Pectate lyase 1 (375 aa).

Positions 1 to 21 (MASCTLLAVLVFLCAIVSCFS) are cleaved as a signal peptide. An intrachain disulfide couples C28 to C45. The N-linked (GlcNAc...) asparagine glycan is linked to N110. C128 and C147 are oxidised to a cystine. The N-linked (GlcNAc...) asparagine glycan is linked to N148. D170 is a Ca(2+) binding site. A glycan (N-linked (GlcNAc...) asparagine) is linked at N178. D194 and D198 together coordinate Ca(2+). R250 is an active-site residue. A glycan (N-linked (GlcNAc...) asparagine) is linked at N293. A disulfide bridge connects residues C306 and C312. The N-linked (GlcNAc...) asparagine glycan is linked to N352.

It belongs to the polysaccharide lyase 1 family. Amb a subfamily. Requires Ca(2+) as cofactor.

It carries out the reaction Eliminative cleavage of (1-&gt;4)-alpha-D-galacturonan to give oligosaccharides with 4-deoxy-alpha-D-galact-4-enuronosyl groups at their non-reducing ends.. Its pathway is glycan metabolism; pectin degradation; 2-dehydro-3-deoxy-D-gluconate from pectin: step 2/5. Its function is as follows. Has pectate lyase activity. The chain is Pectate lyase 1 from Chamaecyparis obtusa (Hinoki false-cypress).